Reading from the N-terminus, the 189-residue chain is Elongation factor P (189 aa).

It belongs to the elongation factor P family.

It localises to the cytoplasm. The protein operates within protein biosynthesis; polypeptide chain elongation. Functionally, involved in peptide bond synthesis. Stimulates efficient translation and peptide-bond synthesis on native or reconstituted 70S ribosomes in vitro. Probably functions indirectly by altering the affinity of the ribosome for aminoacyl-tRNA, thus increasing their reactivity as acceptors for peptidyl transferase. In Pseudomonas fluorescens (strain Pf0-1), this protein is Elongation factor P.